The following is a 129-amino-acid chain: 3-aminoacrylate deaminase RutC (129 aa).

The protein belongs to the RutC family.

The enzyme catalyses (Z)-3-aminoacrylate + H2O + H(+) = 3-oxopropanoate + NH4(+). Its function is as follows. Involved in pyrimidine catabolism. Catalyzes the deamination of 3-aminoacrylate to malonic semialdehyde, a reaction that can also occur spontaneously. RutC may facilitate the reaction and modulate the metabolic fitness, rather than catalyzing essential functions. In Caulobacter sp. (strain K31), this protein is 3-aminoacrylate deaminase RutC.